Here is a 494-residue protein sequence, read N- to C-terminus: Glutamyl-tRNA(Gln) amidotransferase subunit A (494 aa).

Active-site charge relay system residues include Lys80 and Ser160. The disordered stretch occupies residues 140–168; the sequence is GNVISPWRRPGDTAPLAPGGSSGGSSSAV. The active-site Acyl-ester intermediate is Ser184.

The protein belongs to the amidase family. GatA subfamily. In terms of assembly, heterotrimer of A, B and C subunits.

It carries out the reaction L-glutamyl-tRNA(Gln) + L-glutamine + ATP + H2O = L-glutaminyl-tRNA(Gln) + L-glutamate + ADP + phosphate + H(+). Allows the formation of correctly charged Gln-tRNA(Gln) through the transamidation of misacylated Glu-tRNA(Gln) in organisms which lack glutaminyl-tRNA synthetase. The reaction takes place in the presence of glutamine and ATP through an activated gamma-phospho-Glu-tRNA(Gln). The polypeptide is Glutamyl-tRNA(Gln) amidotransferase subunit A (Novosphingobium aromaticivorans (strain ATCC 700278 / DSM 12444 / CCUG 56034 / CIP 105152 / NBRC 16084 / F199)).